The following is a 598-amino-acid chain: MMENNRNYFIAIALSVLIVLGWQFLYMNPRIEAQRKAQEAQKAQQQTEQVQQPAAGGATPAPASGTAPSGQAVATATLEQALAKTPRVAIDTPALSGSINLAGARLDDLKLKGYHETVDDSSPIITLFSPAETKDGYFTELGYIGSDATGSVPGASTLWTAPEGAKLTEKTPVTLSYTNDKGLTFTRTISVDERYMFTIADKVANTGQAPVSLSSYGRVTRYNKPTTPSAYVLHEGFIGVIGDDGLIESKYTAVEKEAVMPAKSTGGWLGITDKYWAATIVPPQASAYEARFSHFSDGQPRYQADYKDDAFTVAPGQSVELKNLVFAGAKEVPVIDGYEASYSIPRFDRLIDWGWFYFITKPMFKLMDFFFRFFGNFGVAILCTTIVVKALFFPLASKQYASMANMKRMQPKMEELKAKFGDDRMGLQQATMQLYKEEKINPIAGCWPVALQIPIFFSLYKVIYITIEMRHAPFFGWIQDLSAPDPTTIVNLFGLLPFTAPTFLHLGVWPLIMGVTMFLQMRMNPTPPDPTQAMIFNWMPLVFMFMLASFPAGLVIYWAWNNTLSVIQQSVIMKRHGVKIELFDNLKGLFRRKTAPSK.

The helical transmembrane segment at 7–27 threads the bilayer; that stretch reads NYFIAIALSVLIVLGWQFLYM. A disordered region spans residues 37–71; that stretch reads AQEAQKAQQQTEQVQQPAAGGATPAPASGTAPSGQ. Low complexity predominate over residues 40–71; that stretch reads AQKAQQQTEQVQQPAAGGATPAPASGTAPSGQ. Helical transmembrane passes span 373 to 393, 447 to 467, 492 to 512, and 538 to 558; these read FFGN…ALFF, WPVA…YITI, LFGL…WPLI, and WMPL…VIYW.

The protein belongs to the OXA1/ALB3/YidC family. Type 1 subfamily. As to quaternary structure, interacts with the Sec translocase complex via SecD. Specifically interacts with transmembrane segments of nascent integral membrane proteins during membrane integration.

Its subcellular location is the cell inner membrane. Required for the insertion and/or proper folding and/or complex formation of integral membrane proteins into the membrane. Involved in integration of membrane proteins that insert both dependently and independently of the Sec translocase complex, as well as at least some lipoproteins. Aids folding of multispanning membrane proteins. The polypeptide is Membrane protein insertase YidC (Rhizobium etli (strain CIAT 652)).